The primary structure comprises 67 residues: UPF0181 protein KPK_1966 (67 aa).

Residues 48-67 are disordered; it reads EQIVARFEDEDEDQDEDEDD. Residues 55-67 are compositionally biased toward acidic residues; the sequence is EDEDEDQDEDEDD.

This sequence belongs to the UPF0181 family.

In Klebsiella pneumoniae (strain 342), this protein is UPF0181 protein KPK_1966.